Consider the following 127-residue polypeptide: Large-conductance mechanosensitive channel (127 aa).

Helical transmembrane passes span valine 14–leucine 34 and glycine 69–valine 89.

It belongs to the MscL family. As to quaternary structure, homopentamer.

It localises to the cell membrane. Functionally, channel that opens in response to stretch forces in the membrane lipid bilayer. May participate in the regulation of osmotic pressure changes within the cell. The protein is Large-conductance mechanosensitive channel of Leuconostoc mesenteroides subsp. mesenteroides (strain ATCC 8293 / DSM 20343 / BCRC 11652 / CCM 1803 / JCM 6124 / NCDO 523 / NBRC 100496 / NCIMB 8023 / NCTC 12954 / NRRL B-1118 / 37Y).